Consider the following 256-residue polypeptide: UstYa family oxidase phomYc (256 aa).

Residues 38–58 (LVLVLQFVLIISLLASLHILG) form a helical membrane-spanning segment. Residues N64 and N132 are each glycosylated (N-linked (GlcNAc...) asparagine). Residues 158–162 (HQLHC) carry the HXXHC 1 motif. An N-linked (GlcNAc...) asparagine glycan is attached at N179. The HXXHC 2 signature appears at 193-197 (HIDHC).

Belongs to the ustYa family.

The protein resides in the membrane. The protein operates within mycotoxin biosynthesis. UstYa family oxidase; part of the gene cluster that mediates the biosynthesis of the phomopsins, a group of hexapeptide mycotoxins which infects lupins and causes lupinosis disease in livestock. Within the pathway, phomYc catalyzes the desaturation of the Ile moiety into 2,3-dehydroisoleucine (dIle). The pathway starts with the processing of the precursor phomA by several endopeptidases including kexin proteases as well as the cluster-specific S41 family peptidase phomP1 and the oligopeptidase phomG to produce 10 identical copies of the hexapeptide Tyr-Val-Ile-Pro-Ile-Asp. After being excised from the precursor peptide, the core peptides are cyclized and modified post-translationally by enzymes encoded within the gene cluster. The timing and order of proteolysis of the phomA precursor and PTMs are still unknown. Two tyrosinase-like enzymes, phomQ1 and phomQ2, catalyze the chlorination and hydroxylation of Tyr, respectively. PhomYb, is proposed to be involved in the construction of the macrocyclic structure. The other 4 ustYa family proteins may be involved in PTMs that generate the unique structure of phomopsin A. PhomYa is required for the hydroxylation of C-beta of Tyr. PhomYc, phomYd, and phomYe are responsible for the biosynthesis of 2,3-dehydroisoleucine (dIle), 2,3-dehydroaspartic acid (dAsp), and 3,4-dehydroproline (dPro), respectively. While dIle formation by phomYc is indispensable for the installation of dAsp by phomYd, the order of the other PTMs have not been elucidated yet. Most of the biosynthetic enzymes likely have broad substrate specificity, and thus, there might be a metabolic grid from a precursor to phomopsin A. The enzyme(s) responsible for the biosynthesis of 3,4-dehydrovaline (dVal) have also not been identified yet. Finally, phomM acts as an S-adenosylmethionine-dependent alpha-N-methyltransferase that catalyzes two successive N-methylation reactions, converting N-desmethyl-phomopsin A to phomopsin A and phomopsin A further to an N,N-dimethylated congener called phomopsin E. This Diaporthe leptostromiformis (Lupinosis disease fungus) protein is UstYa family oxidase phomYc.